A 452-amino-acid chain; its full sequence is Isocitrate dehydrogenase [NADP], mitochondrial (452 aa).

The N-terminal 39 residues, M1 to Y39, are a transit peptide targeting the mitochondrion. K45, K48, K67, and K69 each carry N6-acetyllysine. Residues K80 and K106 each carry the N6-acetyllysine; alternate modification. An N6-succinyllysine; alternate mark is found at K80 and K106. NADP(+) contacts are provided by residues T115–T117 and R122. Position 117 (T117) interacts with D-threo-isocitrate. D-threo-isocitrate-binding positions include S134–R140 and R149. Residue K155 is modified to N6-acetyllysine. The residue at position 166 (K166) is an N6-acetyllysine; alternate. K166 bears the N6-succinyllysine; alternate mark. D-threo-isocitrate is bound at residue R172. N6-acetyllysine; alternate occurs at positions 180 and 193. Residues K180 and K193 each carry the N6-succinyllysine; alternate modification. K199 bears the N6-acetyllysine mark. K256 is modified (N6-acetyllysine; alternate). N6-succinyllysine; alternate is present on K256. Residues K263, K272, K275, and K280 each carry the N6-acetyllysine modification. At K282 the chain carries N6-acetyllysine; alternate. K282 is modified (N6-succinyllysine; alternate). Position 291 (D291) interacts with Mn(2+). Position 299 (K299) interacts with NADP(+). D314 contributes to the Mn(2+) binding site. Residues G349–H354 and N367 each bind NADP(+). The residue at position 384 (K384) is an N6-acetyllysine; alternate. K384 carries the N6-succinyllysine; alternate modification. An N6-acetyllysine mark is found at K400, K413, and K442.

The protein belongs to the isocitrate and isopropylmalate dehydrogenases family. Homodimer. It depends on Mg(2+) as a cofactor. The cofactor is Mn(2+). Post-translationally, acetylation at Lys-413 dramatically reduces catalytic activity. Deacetylated by SIRT3. Predominantly expressed in heart, liver and kidney. Expressed in activated B lymphocytes.

It localises to the mitochondrion. The catalysed reaction is D-threo-isocitrate + NADP(+) = 2-oxoglutarate + CO2 + NADPH. Functionally, plays a role in intermediary metabolism and energy production. It may tightly associate or interact with the pyruvate dehydrogenase complex. This is Isocitrate dehydrogenase [NADP], mitochondrial (Idh2) from Mus musculus (Mouse).